We begin with the raw amino-acid sequence, 188 residues long: Elongation factor P-like protein (188 aa).

Belongs to the elongation factor P family.

The sequence is that of Elongation factor P-like protein from Vibrio campbellii (strain ATCC BAA-1116).